A 261-amino-acid polypeptide reads, in one-letter code: Ribonuclease PH (261 aa).

Residues R87 and 125–127 (GTR) each bind phosphate.

The protein belongs to the RNase PH family. In terms of assembly, homohexameric ring arranged as a trimer of dimers.

It carries out the reaction tRNA(n+1) + phosphate = tRNA(n) + a ribonucleoside 5'-diphosphate. Its function is as follows. Phosphorolytic 3'-5' exoribonuclease that plays an important role in tRNA 3'-end maturation. Removes nucleotide residues following the 3'-CCA terminus of tRNAs; can also add nucleotides to the ends of RNA molecules by using nucleoside diphosphates as substrates, but this may not be physiologically important. Probably plays a role in initiation of 16S rRNA degradation (leading to ribosome degradation) during starvation. In Thermoanaerobacter pseudethanolicus (strain ATCC 33223 / 39E) (Clostridium thermohydrosulfuricum), this protein is Ribonuclease PH.